The chain runs to 169 residues: UPF0398 protein Spy49_1277c (169 aa).

The protein belongs to the UPF0398 family.

The protein is UPF0398 protein Spy49_1277c of Streptococcus pyogenes serotype M49 (strain NZ131).